The primary structure comprises 499 residues: Ribose import ATP-binding protein RbsA 1 (499 aa).

2 consecutive ABC transporter domains span residues 5–240 (LEMR…GRSI) and 249–494 (TEPG…TAGS). 37 to 44 (GENGAGKS) provides a ligand contact to ATP.

Belongs to the ABC transporter superfamily. Ribose importer (TC 3.A.1.2.1) family. In terms of assembly, the complex is composed of an ATP-binding protein (RbsA), two transmembrane proteins (RbsC) and a solute-binding protein (RbsB).

It localises to the cell membrane. It carries out the reaction D-ribose(out) + ATP + H2O = D-ribose(in) + ADP + phosphate + H(+). Part of the ABC transporter complex RbsABC involved in ribose import. Responsible for energy coupling to the transport system. This Rubrobacter xylanophilus (strain DSM 9941 / JCM 11954 / NBRC 16129 / PRD-1) protein is Ribose import ATP-binding protein RbsA 1.